The following is a 284-amino-acid chain: RNA polymerase sigma factor RpoH (284 aa).

Residues 53–122 (LILSHLRFVI…IHEYVLRNWR (70 aa)) form a sigma-70 factor domain-2 region. The Interaction with polymerase core subunit RpoC signature appears at 77 to 80 (DLIQ). The tract at residues 228 to 280 (ALLRLDERSRHIIHARWLDKNKKNTLQNIANNYGISAERVRQLEKNAMKKLKL) is sigma-70 factor domain-4. Residues 253–272 (LQNIANNYGISAERVRQLEK) constitute a DNA-binding region (H-T-H motif).

It belongs to the sigma-70 factor family. RpoH subfamily. Interacts with the RNA polymerase core enzyme.

It localises to the cytoplasm. Functionally, sigma factors are initiation factors that promote the attachment of RNA polymerase to specific initiation sites and are then released. This sigma factor is involved in regulation of expression of heat shock genes. This Buchnera aphidicola subsp. Acyrthosiphon pisum (strain APS) (Acyrthosiphon pisum symbiotic bacterium) protein is RNA polymerase sigma factor RpoH.